Here is a 157-residue protein sequence, read N- to C-terminus: Phosphopantetheine adenylyltransferase (157 aa).

This sequence belongs to the eukaryotic CoaD family.

It is found in the cytoplasm. The enzyme catalyses (R)-4'-phosphopantetheine + ATP + H(+) = 3'-dephospho-CoA + diphosphate. It functions in the pathway cofactor biosynthesis; coenzyme A biosynthesis. In terms of biological role, reversibly transfers an adenylyl group from ATP to 4'-phosphopantetheine, yielding dephospho-CoA (dPCoA) and pyrophosphate. In Methanopyrus kandleri (strain AV19 / DSM 6324 / JCM 9639 / NBRC 100938), this protein is Phosphopantetheine adenylyltransferase.